A 160-amino-acid polypeptide reads, in one-letter code: MKKEVTVESFELDHTIVKAPYIRLISEEVGPKGDIITNFDIRLIQPNENAMDTAGLHTIEHLLAKLIRQRIDGLIDCSPFGCRTGFHMIMWGKQDSEKIAQVIKSSLEEIAEGITWEDVPGTTIESCGNYKDHSLHSAKEWAKLILSQGISTDAFERKPI.

Fe cation contacts are provided by His-57, His-61, and Cys-127.

Belongs to the LuxS family. In terms of assembly, homodimer. Requires Fe cation as cofactor.

The catalysed reaction is S-(5-deoxy-D-ribos-5-yl)-L-homocysteine = (S)-4,5-dihydroxypentane-2,3-dione + L-homocysteine. In terms of biological role, involved in the synthesis of autoinducer 2 (AI-2) which is secreted by bacteria and is used to communicate both the cell density and the metabolic potential of the environment. The regulation of gene expression in response to changes in cell density is called quorum sensing. Catalyzes the transformation of S-ribosylhomocysteine (RHC) to homocysteine (HC) and 4,5-dihydroxy-2,3-pentadione (DPD). The protein is S-ribosylhomocysteine lyase of Streptococcus suis (strain 98HAH33).